Here is a 283-residue protein sequence, read N- to C-terminus: Elongation factor Ts (283 aa).

Residues 80–83 form an involved in Mg(2+) ion dislocation from EF-Tu region; that stretch reads TDFV.

This sequence belongs to the EF-Ts family.

The protein resides in the cytoplasm. Functionally, associates with the EF-Tu.GDP complex and induces the exchange of GDP to GTP. It remains bound to the aminoacyl-tRNA.EF-Tu.GTP complex up to the GTP hydrolysis stage on the ribosome. This chain is Elongation factor Ts, found in Erwinia tasmaniensis (strain DSM 17950 / CFBP 7177 / CIP 109463 / NCPPB 4357 / Et1/99).